We begin with the raw amino-acid sequence, 86 residues long: Acyl-CoA-binding protein homolog (86 aa).

Residues V2–A86 enclose the ACB domain. An acyl-CoA is bound by residues K14, Y29–K33, K51, K55, and Y74.

It belongs to the ACBP family. As to expression, expressed in larval and pupal brains. In adults, expressed in cardia, part of the Malpighian tubules, fat body, and gametes of both sexes.

Functionally, binds medium- and long-chain acyl-CoA esters with very high affinity and may function as an intracellular carrier of acyl-CoA esters. May be involved in energy metabolism in a manner that depends on the substrate used for energy production. Dbi and its metabolites are involved in the regulation of multiple biological processes. The protein is Acyl-CoA-binding protein homolog of Drosophila melanogaster (Fruit fly).